Consider the following 515-residue polypeptide: Maturase K (515 aa).

Belongs to the intron maturase 2 family. MatK subfamily.

It is found in the plastid. It localises to the chloroplast. In terms of biological role, usually encoded in the trnK tRNA gene intron. Probably assists in splicing its own and other chloroplast group II introns. The chain is Maturase K from Pinus contorta (Shore pine).